A 396-amino-acid chain; its full sequence is MAKAKFERTKPHCNIGTIGHVDHGKTSLTAAITKTLAKTGGATFKAYDQIDAAPEERARGITISTAHVEYETAKRHYAHVDCPGHADYVKNMITGAAQMDGAILVVSAADGPMPQTREHILLARQVGVPALVVFLNKVDQVDDPELLELVEMEVRELLSAYQFPGDDIPIIKGSALVTLEDGDPEVGENRVRDLMDAVDAYIPQPERPVDRPFLMPIEDVFSISGRGTVVTGRVERGVVNVGDEIEIVGLRATQKTTVTGVEMFRKLLDRGEAGDNIGALVRGTKREDVERGQVLAKPGSITPHTKFKAEAYILTKEEGGRHTPFFTNYRPQFYFRTTDVTGVVHLPEGTEMVMPGDNIAMDVELIAPIAMDEGLRFAIREGGRTVGAGVVASITA.

The 197-residue stretch at 10–206 (KPHCNIGTIG…AVDAYIPQPE (197 aa)) folds into the tr-type G domain. The interval 19–26 (GHVDHGKT) is G1. 19–26 (GHVDHGKT) is a GTP binding site. Residue Thr-26 participates in Mg(2+) binding. Residues 60–64 (GITIS) are G2. The interval 81 to 84 (DCPG) is G3. Residues 81 to 85 (DCPGH) and 136 to 139 (NKVD) each bind GTP. A G4 region spans residues 136-139 (NKVD). The G5 stretch occupies residues 174 to 176 (SAL).

It belongs to the TRAFAC class translation factor GTPase superfamily. Classic translation factor GTPase family. EF-Tu/EF-1A subfamily. As to quaternary structure, monomer.

The protein localises to the cytoplasm. The catalysed reaction is GTP + H2O = GDP + phosphate + H(+). Its function is as follows. GTP hydrolase that promotes the GTP-dependent binding of aminoacyl-tRNA to the A-site of ribosomes during protein biosynthesis. The polypeptide is Elongation factor Tu (Gluconacetobacter diazotrophicus (strain ATCC 49037 / DSM 5601 / CCUG 37298 / CIP 103539 / LMG 7603 / PAl5)).